We begin with the raw amino-acid sequence, 270 residues long: tRNA pseudouridine synthase A (270 aa).

D60 serves as the catalytic Nucleophile. An RNA binding region spans residues 107–111 (FHARF). Y118 is a substrate binding site. An interaction with tRNA region spans residues 168–172 (QCQSR).

Belongs to the tRNA pseudouridine synthase TruA family. In terms of assembly, homodimer.

The enzyme catalyses uridine(38/39/40) in tRNA = pseudouridine(38/39/40) in tRNA. Formation of pseudouridine at positions 38, 39 and 40 in the anticodon stem and loop of transfer RNAs. The protein is tRNA pseudouridine synthase A of Klebsiella pneumoniae subsp. pneumoniae (strain ATCC 700721 / MGH 78578).